The primary structure comprises 248 residues: Ribonuclease 3 (248 aa).

The region spanning 15–142 is the RNase III domain; the sequence is LKAFFKQYHV…MIAALYLDLG (128 aa). Mg(2+) is bound at residue E55. D59 is an active-site residue. Mg(2+) is bound by residues D128 and E131. Residue E131 is part of the active site. The 72-residue stretch at 169 to 240 folds into the DRBM domain; the sequence is DYKTELQEFL…ARDALQKLAT (72 aa).

It belongs to the ribonuclease III family. In terms of assembly, homodimer. The cofactor is Mg(2+).

The protein localises to the cytoplasm. It catalyses the reaction Endonucleolytic cleavage to 5'-phosphomonoester.. Its function is as follows. Digests double-stranded RNA. Involved in the processing of primary rRNA transcript to yield the immediate precursors to the large and small rRNAs (23S and 16S). Processes some mRNAs, and tRNAs when they are encoded in the rRNA operon. Processes pre-crRNA and tracrRNA of type II CRISPR loci if present in the organism. The polypeptide is Ribonuclease 3 (Spiroplasma citri).